The chain runs to 1377 residues: DNA-directed RNA polymerase subunit beta (1377 aa).

This sequence belongs to the RNA polymerase beta chain family. As to quaternary structure, the RNAP catalytic core consists of 2 alpha, 1 beta, 1 beta' and 1 omega subunit. When a sigma factor is associated with the core the holoenzyme is formed, which can initiate transcription.

It catalyses the reaction RNA(n) + a ribonucleoside 5'-triphosphate = RNA(n+1) + diphosphate. Functionally, DNA-dependent RNA polymerase catalyzes the transcription of DNA into RNA using the four ribonucleoside triphosphates as substrates. This is DNA-directed RNA polymerase subunit beta from Azoarcus sp. (strain BH72).